The chain runs to 581 residues: Frizzled-10 (581 aa).

The N-terminal stretch at 1–20 (MQRPGPRLWLVLQVMGSCAA) is a signal peptide. Residues 21-225 (ISSMDMERPG…DVYWSREDKR (205 aa)) are Extracellular-facing. One can recognise an FZ domain in the interval 29–150 (PGDGKCQPIE…NDPNYLCMEA (122 aa)). 5 cysteine pairs are disulfide-bonded: Cys34-Cys95, Cys42-Cys88, Cys79-Cys117, Cys106-Cys147, and Cys110-Cys134. A glycan (N-linked (GlcNAc...) asparagine) is linked at Asn48. Asn153 carries N-linked (GlcNAc...) asparagine glycosylation. Residues 226–246 (FAVVWLAIWAVLCFFSSAFTV) form a helical membrane-spanning segment. The Cytoplasmic portion of the chain corresponds to 247–262 (LTFLIDPARFRYPERP). A helical transmembrane segment spans residues 263 to 283 (IIFLSMCYCVYSVGYLIRLFA). The Extracellular segment spans residues 284–311 (GAESIACDRDSGQLYVIQEGLESTGCTL). The helical transmembrane segment at 312–332 (VFLVLYYFGMASSLWWVVLTL) threads the bilayer. Residues 333-351 (TWFLAAGKKWGHEAIEANS) lie on the Cytoplasmic side of the membrane. The helical transmembrane segment at 352–372 (SYFHLAAWAIPAVKTILILVM) threads the bilayer. Over 373–393 (RRVAGDELTGVCYVGSMDVNA) the chain is Extracellular. A helical membrane pass occupies residues 394 to 414 (LTGFVLIPLACYLVIGTSFIL). At 415 to 443 (SGFVALFHIRRVMKTGGENTDKLEKLMVR) the chain is on the cytoplasmic side. The helical transmembrane segment at 444-464 (IGLFSVLYTVPATCVIACYFY) threads the bilayer. Topologically, residues 465–502 (ERLNMDYWKILAAQHKCKMNNQTKTLDCLMAASIPAVE) are extracellular. Residue Asn485 is glycosylated (N-linked (GlcNAc...) asparagine). A helical membrane pass occupies residues 503–523 (IFMVKIFMLLVVGITSGMWIW). The Cytoplasmic portion of the chain corresponds to 524–581 (TSKTLQSWQQVCSRRLKKKSRRKPASVITSGGIYKKAQHPQKTHHGKYEIPAQSPTCV). The short motif at 526-531 (KTLQSW) is the Lys-Thr-X-X-X-Trp motif, mediates interaction with the PDZ domain of Dvl family members element. The interval 560-581 (AQHPQKTHHGKYEIPAQSPTCV) is disordered. The PDZ-binding motif lies at 579–581 (TCV).

It belongs to the G-protein coupled receptor Fz/Smo family. As to quaternary structure, interacts with WNT7B. Interacts with MYOC. Post-translationally, ubiquitinated by ZNRF3, leading to its degradation by the proteasome. In terms of tissue distribution, highest levels in the placenta and fetal kidney, followed by fetal lung and brain. In adult brain, abundantly expressed in the cerebellum, followed by cerebral cortex, medulla and spinal cord; very low levels in total brain, frontal lobe, temporal lobe and putamen. Weak expression detected in adult brain, heart, lung, skeletal muscle, pancreas, spleen and prostate.

It localises to the cell membrane. Receptor for Wnt proteins. Functions in the canonical Wnt/beta-catenin signaling pathway. The canonical Wnt/beta-catenin signaling pathway leads to the activation of disheveled proteins, inhibition of GSK-3 kinase, nuclear accumulation of beta-catenin and activation of Wnt target genes. A second signaling pathway involving PKC and calcium fluxes has been seen for some family members, but it is not yet clear if it represents a distinct pathway or if it can be integrated in the canonical pathway, as PKC seems to be required for Wnt-mediated inactivation of GSK-3 kinase. Both pathways seem to involve interactions with G-proteins. May be involved in transduction and intercellular transmission of polarity information during tissue morphogenesis and/or in differentiated tissues. This chain is Frizzled-10 (FZD10), found in Homo sapiens (Human).